Here is a 239-residue protein sequence, read N- to C-terminus: Putative zinc finger protein 132L (239 aa).

The tract at residues 20–40 (DASLSTKSPKREPSQEKEIKK) is disordered. Residues 28 to 40 (PKREPSQEKEIKK) show a composition bias toward basic and acidic residues. 2 consecutive C3H1-type zinc fingers follow at residues 44–68 (IKKNKPCKYEEECKRSDCVFLHPGE) and 81–106 (RRKTRMCKYVKKCNKGKNCPFAHDES). A disordered region spans residues 128–151 (PGECKFSHPPPPPPSPPSPPPKEE). Pro residues predominate over residues 135 to 147 (HPPPPPPSPPSPP).

This Acheta domesticus (House cricket) protein is Putative zinc finger protein 132L.